The sequence spans 455 residues: MALWGGRFQGETSALFKLFNDSLPVDYRLFEQDVVGSIAWADAIASVGIITATECSDLKKALNELLVEVKGDPAIILASGAEDIHSFVESALIAKVGDLGKKLHTGRSRNDQVATDLKLWCQSEGAALVARLQTLRSELIALAEREFDAVMPGYTHLQRAQPVTFGHWCLAYVEMIERDLSRLTDALKRANTCPLGSGALAGTAYQMDRHSLAVALNFASPTLNSLDSVSDRDHVVELCGAASISMMHLSRMAEDLIFFNSGEAGFISLSDEVTSGSSLMPQKKNPDALELIRGKTGRVYGSLVGILTTMKALPLAYNKDMQEDKEGLFDVVDSWAICLDMAALVLSGLVVNRPNALLAAQQGYANATELADYLVSKGMPFREAHHVVGVAVVAAIAKKIPLEAFSLAEFRTFADIIEADVYPNLTIEACLAKRDVLGGTALTQVKQAIAAKKVI.

This sequence belongs to the lyase 1 family. Argininosuccinate lyase subfamily.

It is found in the cytoplasm. It carries out the reaction 2-(N(omega)-L-arginino)succinate = fumarate + L-arginine. The protein operates within amino-acid biosynthesis; L-arginine biosynthesis; L-arginine from L-ornithine and carbamoyl phosphate: step 3/3. In Shewanella sp. (strain MR-7), this protein is Argininosuccinate lyase.